A 178-amino-acid chain; its full sequence is Neuroblastoma suppressor of tumorigenicity 1 (178 aa).

A signal peptide spans 1-16 (MLWVLVGAVLPVMLLA). 5 disulfides stabilise this stretch: Cys-34–Cys-84, Cys-48–Cys-98, Cys-58–Cys-117, Cys-62–Cys-119, and Cys-81–Cys-122. Residues 34–123 (CEAKNITQIV…IVHCSCQACG (90 aa)) form the CTCK domain. The tract at residues 132 to 178 (NVYVQGEDSPGSQPGPHSHAHPHPGGQTPEPEEPPGAPQVEEEGAED) is disordered. Low complexity predominate over residues 140 to 160 (SPGSQPGPHSHAHPHPGGQTP).

It belongs to the DAN family. As to quaternary structure, homodimer.

The protein resides in the secreted. Functionally, possible candidate as a tumor suppressor gene of neuroblastoma. May play an important role in preventing cells from entering the final stage (G1/S) of the transformation process. This chain is Neuroblastoma suppressor of tumorigenicity 1 (Nbl1), found in Mus musculus (Mouse).